A 155-amino-acid chain; its full sequence is NADPH-dependent 7-cyano-7-deazaguanine reductase (155 aa).

Cys53 functions as the Thioimide intermediate in the catalytic mechanism. Asp60 (proton donor) is an active-site residue. Substrate contacts are provided by residues Val75–Ser77 and His94–Glu95.

The protein belongs to the GTP cyclohydrolase I family. QueF type 1 subfamily.

It localises to the cytoplasm. It catalyses the reaction 7-aminomethyl-7-carbaguanine + 2 NADP(+) = 7-cyano-7-deazaguanine + 2 NADPH + 3 H(+). The protein operates within tRNA modification; tRNA-queuosine biosynthesis. Its function is as follows. Catalyzes the NADPH-dependent reduction of 7-cyano-7-deazaguanine (preQ0) to 7-aminomethyl-7-deazaguanine (preQ1). The sequence is that of NADPH-dependent 7-cyano-7-deazaguanine reductase from Ruegeria pomeroyi (strain ATCC 700808 / DSM 15171 / DSS-3) (Silicibacter pomeroyi).